An 82-amino-acid polypeptide reads, in one-letter code: MVTIRLQRGGAKKRPFYQIVVADSRFSRDGRFIEKVGFFNPIAAGQEEKIRLDLPRVEHWVGQGASLSDRVAKLVKDARKAA.

It belongs to the bacterial ribosomal protein bS16 family.

The protein is Small ribosomal subunit protein bS16 of Pseudoalteromonas translucida (strain TAC 125).